We begin with the raw amino-acid sequence, 121 residues long: Small ribosomal subunit protein uS13 (121 aa).

The interval 89 to 121 is disordered; that stretch reads RRHRMSLPVRGQRTRTNARTRRGSRKTVAGRKK. Positions 100–121 are enriched in basic residues; that stretch reads QRTRTNARTRRGSRKTVAGRKK.

Belongs to the universal ribosomal protein uS13 family. Part of the 30S ribosomal subunit. Forms a loose heterodimer with protein S19. Forms two bridges to the 50S subunit in the 70S ribosome.

Located at the top of the head of the 30S subunit, it contacts several helices of the 16S rRNA. In the 70S ribosome it contacts the 23S rRNA (bridge B1a) and protein L5 of the 50S subunit (bridge B1b), connecting the 2 subunits; these bridges are implicated in subunit movement. Contacts the tRNAs in the A and P-sites. The chain is Small ribosomal subunit protein uS13 from Prochlorococcus marinus subsp. pastoris (strain CCMP1986 / NIES-2087 / MED4).